The following is a 30-amino-acid chain: 2S seed storage-like protein (30 aa).

The protein belongs to the 2S seed storage albumins family. As to quaternary structure, the mature protein is a heterodimer of a small and a large chain linked by 2 disulfide bonds. Extracted from castor bean.

Its function is as follows. This is a 2S seed storage protein. Inhibits spore germination in R.solani and F.oxysporum. Exhibits anti-trypsin activity. This is 2S seed storage-like protein from Ricinus communis (Castor bean).